A 196-amino-acid chain; its full sequence is Imidazoleglycerol-phosphate dehydratase (196 aa).

This sequence belongs to the imidazoleglycerol-phosphate dehydratase family.

The protein localises to the cytoplasm. The catalysed reaction is D-erythro-1-(imidazol-4-yl)glycerol 3-phosphate = 3-(imidazol-4-yl)-2-oxopropyl phosphate + H2O. Its pathway is amino-acid biosynthesis; L-histidine biosynthesis; L-histidine from 5-phospho-alpha-D-ribose 1-diphosphate: step 6/9. This is Imidazoleglycerol-phosphate dehydratase from Moorella thermoacetica (strain ATCC 39073 / JCM 9320).